Consider the following 868-residue polypeptide: Protein translocase subunit SecA (868 aa).

Residues Gln85, 103-107, and Asp508 contribute to the ATP site; that span reads GEGKT.

It belongs to the SecA family. In terms of assembly, monomer and homodimer. Part of the essential Sec protein translocation apparatus which comprises SecA, SecYEG and auxiliary proteins SecDF. Other proteins may also be involved.

It is found in the cell membrane. The protein resides in the cytoplasm. The catalysed reaction is ATP + H2O + cellular proteinSide 1 = ADP + phosphate + cellular proteinSide 2.. Functionally, part of the Sec protein translocase complex. Interacts with the SecYEG preprotein conducting channel. Has a central role in coupling the hydrolysis of ATP to the transfer of proteins into and across the cell membrane, serving as an ATP-driven molecular motor driving the stepwise translocation of polypeptide chains across the membrane. The protein is Protein translocase subunit SecA of Deinococcus radiodurans (strain ATCC 13939 / DSM 20539 / JCM 16871 / CCUG 27074 / LMG 4051 / NBRC 15346 / NCIMB 9279 / VKM B-1422 / R1).